The primary structure comprises 151 residues: MQFTSLLLAVIFLISLVSIDGLLRRCYQCRSRGELGSCKDPFTFNATDVEQEPGVAAIPCASGWCGKVIEGGGTYAIDDYDLAIQRMCVQRGPDDNMDRCADTIYNYKKVYMCFCQGDLCNGARSWSSAPQMILITMLPLLGSWLLQRMRN.

Residues 1–19 form the signal peptide; sequence MQFTSLLLAVIFLISLVSI. Over 20-125 the chain is Extracellular; sequence DGLLRRCYQC…QGDLCNGARS (106 aa). Cystine bridges form between Cys-26–Cys-65, Cys-29–Cys-38, Cys-60–Cys-88, Cys-100–Cys-113, and Cys-115–Cys-120. Asn-45 carries N-linked (GlcNAc...) asparagine glycosylation. Residue Asn-121 is the site of GPI-anchor amidated asparagine attachment. Residues 122-151 constitute a propeptide, removed in mature form; the sequence is GARSWSSAPQMILITMLPLLGSWLLQRMRN. Residues 126–146 traverse the membrane as a helical segment; it reads WSSAPQMILITMLPLLGSWLL. Residues 147–151 lie on the Cytoplasmic side of the membrane; it reads QRMRN.

The protein belongs to the quiver family.

The protein resides in the cell membrane. Its function is as follows. Required for chitin fiber assembly and organization involved in cuticle formation and tracheal development. The polypeptide is UPAR/Ly6 domain-containing protein rtv (Drosophila melanogaster (Fruit fly)).